A 174-amino-acid chain; its full sequence is uncharacterized protein (174 aa).

A helical membrane pass occupies residues 7-24; sequence LLLLAFAVCLAVGFSGCL.

The protein resides in the membrane. This is an uncharacterized protein from Methanocaldococcus jannaschii (strain ATCC 43067 / DSM 2661 / JAL-1 / JCM 10045 / NBRC 100440) (Methanococcus jannaschii).